Consider the following 321-residue polypeptide: Glutamyl-Q tRNA(Asp) synthetase (321 aa).

L-glutamate contacts are provided by residues 25 to 29 (RFAPS) and Glu-61. The 'HIGH' region motif lies at 28-38 (PSPSGDLHFGS). Cys-117, Cys-119, Tyr-131, and Cys-135 together coordinate Zn(2+). Residues Tyr-188 and Arg-206 each contribute to the L-glutamate site. The 'KMSKS' region motif lies at 244–248 (KLSKQ). An ATP-binding site is contributed by Lys-247.

The protein belongs to the class-I aminoacyl-tRNA synthetase family. GluQ subfamily. Requires Zn(2+) as cofactor.

Functionally, catalyzes the tRNA-independent activation of glutamate in presence of ATP and the subsequent transfer of glutamate onto a tRNA(Asp). Glutamate is transferred on the 2-amino-5-(4,5-dihydroxy-2-cyclopenten-1-yl) moiety of the queuosine in the wobble position of the QUC anticodon. This chain is Glutamyl-Q tRNA(Asp) synthetase, found in Yersinia pestis.